We begin with the raw amino-acid sequence, 212 residues long: uncharacterized protein (212 aa).

Positions 53 and 74 each coordinate S-adenosyl-L-methionine.

This sequence belongs to the methyltransferase superfamily. YrrT family.

Could be a S-adenosyl-L-methionine-dependent methyltransferase. This is an uncharacterized protein from Exiguobacterium sibiricum (strain DSM 17290 / CCUG 55495 / CIP 109462 / JCM 13490 / 255-15).